A 391-amino-acid chain; its full sequence is Formate-dependent phosphoribosylglycinamide formyltransferase (391 aa).

N(1)-(5-phospho-beta-D-ribosyl)glycinamide is bound by residues 18 to 19 and Glu78; that span reads EL. ATP contacts are provided by residues Arg110, Lys151, 156 to 161, 191 to 194, and Glu199; these read SSGKGQ and EEFI. An ATP-grasp domain is found at 115 to 305; the sequence is DLAAQQLGLR…EFELHLRAVL (191 aa). 2 residues coordinate Mg(2+): Glu264 and Glu276. Residues Asp283, Lys353, and 360 to 361 each bind N(1)-(5-phospho-beta-D-ribosyl)glycinamide; that span reads RR.

It belongs to the PurK/PurT family. In terms of assembly, homodimer.

The catalysed reaction is N(1)-(5-phospho-beta-D-ribosyl)glycinamide + formate + ATP = N(2)-formyl-N(1)-(5-phospho-beta-D-ribosyl)glycinamide + ADP + phosphate + H(+). It functions in the pathway purine metabolism; IMP biosynthesis via de novo pathway; N(2)-formyl-N(1)-(5-phospho-D-ribosyl)glycinamide from N(1)-(5-phospho-D-ribosyl)glycinamide (formate route): step 1/1. In terms of biological role, involved in the de novo purine biosynthesis. Catalyzes the transfer of formate to 5-phospho-ribosyl-glycinamide (GAR), producing 5-phospho-ribosyl-N-formylglycinamide (FGAR). Formate is provided by PurU via hydrolysis of 10-formyl-tetrahydrofolate. The polypeptide is Formate-dependent phosphoribosylglycinamide formyltransferase (Synechococcus elongatus (strain ATCC 33912 / PCC 7942 / FACHB-805) (Anacystis nidulans R2)).